Consider the following 39-residue polypeptide: AEQQNFLSDLTGSFSSPCNENPTVAMMXISYXXQXIWAS.

The enzyme catalyses D-fructose + NADP(+) = 5-dehydro-D-fructose + NADPH + H(+). This Erwinia citreus protein is Fructose 5-dehydrogenase [NADP(+)].